A 542-amino-acid chain; its full sequence is Importin subunit alpha-1 (542 aa).

The segment at 1–29 (MSASSRFIPEHRRQNYKGKGTFQADELRR) is disordered. Residues 1 to 60 (MSASSRFIPEHRRQNYKGKGTFQADELRRRRETQQIEIRKQKREENLNKRRNLVDVQEPA) form the IBB domain. ARM repeat units lie at residues 114 to 155 (IQKV…SSNQ), 156 to 197 (THVV…SPMC), 198 to 240 (RDHV…KNPQ), 241 to 282 (PDWN…ANEK), 283 to 324 (IQAI…DDVQ), 325 to 366 (TQVI…NSSQ), 367 to 408 (IQYV…GARR), and 409 to 453 (PDQI…GELD).

It belongs to the importin alpha family. In terms of assembly, interacts with pap1.

It localises to the nucleus. Its function is as follows. Binds specifically and directly to substrates containing either a simple or bipartite NLS motif. Promotes docking of import substrates to the nuclear envelope. Seems to act as a cytosolic receptor for both simple and bipartite NLS motifs. Has an essential role in mitotic chromosome condensation. Involved in nuclear protein import. Required for efficient nuclear import of both an SV40 nuclear localization signal-containing reporter protein and the pap1 component of the stress response MAP kinase pathway. Required for proper mitotic progression. The polypeptide is Importin subunit alpha-1 (cut15) (Schizosaccharomyces pombe (strain 972 / ATCC 24843) (Fission yeast)).